Consider the following 216-residue polypeptide: UPF0502 protein VPA1223 (216 aa).

This sequence belongs to the UPF0502 family.

The chain is UPF0502 protein VPA1223 from Vibrio parahaemolyticus serotype O3:K6 (strain RIMD 2210633).